The chain runs to 412 residues: P-selectin glycoprotein ligand 1 (412 aa).

The first 17 residues, 1–17 (MPLQLLLLLILLGPGNS), serve as a signal peptide directing secretion. Residues 18–41 (LQLWDTWADEAEKALGPLLARDRR) constitute a propeptide that is removed on maturation. Residues 18–320 (LQLWDTWADE…APDHISVKQC (303 aa)) lie on the Extracellular side of the membrane. Gln42 carries the pyrrolidone carboxylic acid modification. 3 positions are modified to sulfotyrosine: Tyr46, Tyr48, and Tyr51. Positions 56 to 95 (ETEPPEMLRNSTDTTPLTGPGTPESTTVEPAARRSTGLDA) are disordered. An O-linked (GalNAc...) threonine glycan is attached at Thr57. Asn65 carries N-linked (GlcNAc...) asparagine glycosylation. The segment covering 66–82 (STDTTPLTGPGTPESTT) has biased composition (low complexity). N-linked (GlcNAc...) asparagine glycosylation is present at Asn111. Repeat copies occupy residues 122–131 (QTTQPAATEA), 132–141 (QTTQPVPTEA), 142–151 (QTTPLAATEA), 162–171 (QTTPLAATEA), 182–191 (QTTQPTGLEA), 192–201 (QTTAPAAMEA), 202–211 (QTTAPAAMEA), 212–221 (QTTPPAAMEA), 222–231 (QTTQTTAMEA), 232–241 (QTTAPEATEA), 242–251 (QTTQPTATEA), and 252–261 (QTTPLAAMEA). A 12 X 10 AA tandem repeats region spans residues 122–261 (QTTQPAATEA…QTTPLAAMEA (140 aa)). Disordered regions lie at residues 125–146 (QPAA…TTPL) and 166–252 (LAAT…TEAQ). N-linked (GlcNAc...) asparagine glycosylation occurs at Asn302. Residues 321–341 (LLAILILALVATIFFVCTVVL) traverse the membrane as a helical segment. Over 342–412 (AVRLSRKGHM…DDLTLHSFLP (71 aa)) the chain is Cytoplasmic. A disordered region spans residues 374–412 (EGPSATANGGLSKAKSPGLTPEPREDREGDDLTLHSFLP). The segment covering 395–406 (EPREDREGDDLT) has biased composition (basic and acidic residues). Thr406 is subject to Phosphothreonine. Ser409 carries the phosphoserine modification.

Homodimer; disulfide-linked. Interaction with P-, E- and L-selectins, through their lectin/EGF domains, is required for promoting recruitment and rolling of leukocytes. These interactions require sialyl Lewis X glycan modification but there is a differing dependence for tyrosine sulfations. Sulfation on Tyr-51 of PSGL1 is most important for high affinity L-selectin/SELL binding while P-selectin/SELP requires sulfation on Tyr-48. E-selectin/SELE binds with much lower affinity and requires the sLe(x) epitope, but apparently not tyrosine sulfation. Dimerization appears not to be required for P-selectin/SELP binding. Interacts with SNX20. Interacts with MSN and SYK; mediates the activation of SYK by SELPLG. Interacts with HAVCR1. As to quaternary structure, (Microbial infection) Interacts with enterovirus 71 capsid proteins. In terms of assembly, (Microbial infection) Interacts with Staphylococcus aureus proteins SSL5 and SSL11; these interactions prevent SELPLG-mediated neutrophil rolling. Displays complex, core-2, sialylated and fucosylated O-linked oligosaccharides, at least some of which appear to contain poly-N-acetyllactosamine with varying degrees of substitution. Mainly disialylated or neutral forms of the core-2 tetrasaccharide, Galbeta1--&gt;4GlcNAcbeta1--&gt;6(Galbeta1--&gt;3)GalNAcOH. The GlcN:GalN ratio is approximately 2:1 and the Man:Fuc ratio 3:5. Contains about 14% fucose with alpha-1,3 linkage present in two forms: One species is a disialylated, monofucosylated glycan, and the other, a monosialylated, trifucosylated glycan with a polylactosamine backbone. The fucosylated forms carry the Lewis antigen and are important for interaction with selectins and for functioning in leukocyte rolling. The modification containing the sialyl Lewis X glycan is on Thr-57. No sulfated O-glycans. Some N-glycosylation. Post-translationally, sulfation, in conjunction with the SLe(x)-containing glycan, is necessary for P- and L-selectin binding. High affinity P-selectin binding has a preferred requirement for the isomer sulfated on both Tyr-48 and Tyr-51, whereas L-selectin binding requires predominantly sulfation on Tyr-51 with sulfation on Tyr-48 playing only a minor role. These sulfations play an important role in L- and P-selectin-mediated neutrophil recruitment, and leukocyte rolling. In terms of tissue distribution, expressed on neutrophils, monocytes and most lymphocytes.

It is found in the membrane. In terms of biological role, a SLe(x)-type proteoglycan, which through high affinity, calcium-dependent interactions with E-, P- and L-selectins, mediates rapid rolling of leukocytes over vascular surfaces during the initial steps in inflammation. Critical for the initial leukocyte capture. Functionally, (Microbial infection) Acts as a receptor for enterovirus 71. This is P-selectin glycoprotein ligand 1 (SELPLG) from Homo sapiens (Human).